Reading from the N-terminus, the 268-residue chain is Interleukin-1 beta (268 aa).

Positions 1–116 (MAEVPELASE…TRNNDACVHD (116 aa)) are excised as a propeptide.

Belongs to the IL-1 family. As to quaternary structure, monomer. In its precursor form, weakly interacts with full-length MEFV; the mature cytokine does not interact at all. Interacts with integrins ITGAV:ITGBV and ITGA5:ITGB1; integrin-binding is required for IL1B signaling. Interacts with cargo receptor TMED10; the interaction is direct and is required for the secretion of IL1B mature form. Interacts with HSP90AB1; the interaction facilitates cargo translocation into the ERGIC. Interacts with HSP90B1; the interaction facilitates cargo translocation into the ERGIC.

The protein resides in the cytoplasm. Its subcellular location is the cytosol. It is found in the secreted. The protein localises to the lysosome. It localises to the extracellular exosome. In terms of biological role, potent pro-inflammatory cytokine. Initially discovered as the major endogenous pyrogen, induces prostaglandin synthesis, neutrophil influx and activation, T-cell activation and cytokine production, B-cell activation and antibody production, and fibroblast proliferation and collagen production. Promotes Th17 differentiation of T-cells. Synergizes with IL12/interleukin-12 to induce IFNG synthesis from T-helper 1 (Th1) cells. Plays a role in angiogenesis by inducing VEGF production synergistically with TNF and IL6. Involved in transduction of inflammation downstream of pyroptosis: its mature form is specifically released in the extracellular milieu by passing through the gasdermin-D (GSDMD) pore. This chain is Interleukin-1 beta (IL1B), found in Macaca fascicularis (Crab-eating macaque).